We begin with the raw amino-acid sequence, 189 residues long: GTP cyclohydrolase 1 (189 aa).

3 residues coordinate Zn(2+): Cys79, His82, and Cys150.

This sequence belongs to the GTP cyclohydrolase I family. As to quaternary structure, homomer.

It catalyses the reaction GTP + H2O = 7,8-dihydroneopterin 3'-triphosphate + formate + H(+). It functions in the pathway cofactor biosynthesis; 7,8-dihydroneopterin triphosphate biosynthesis; 7,8-dihydroneopterin triphosphate from GTP: step 1/1. In Rickettsia rickettsii (strain Iowa), this protein is GTP cyclohydrolase 1.